A 186-amino-acid chain; its full sequence is Nucleoside diphosphate kinase 6 (186 aa).

ATP contacts are provided by K19, F68, R96, T102, R116, and N126. H129 functions as the Pros-phosphohistidine intermediate in the catalytic mechanism.

Belongs to the NDK family. Mg(2+) serves as cofactor. Expressed at a moderately low level in many tissues. Most abundant in kidney, prostate, ovary, intestine, and spleen.

It catalyses the reaction a 2'-deoxyribonucleoside 5'-diphosphate + ATP = a 2'-deoxyribonucleoside 5'-triphosphate + ADP. The enzyme catalyses a ribonucleoside 5'-diphosphate + ATP = a ribonucleoside 5'-triphosphate + ADP. Major role in the synthesis of nucleoside triphosphates other than ATP. The ATP gamma phosphate is transferred to the NDP beta phosphate via a ping-pong mechanism, using a phosphorylated active-site intermediate. Inhibitor of p53-induced apoptosis. The sequence is that of Nucleoside diphosphate kinase 6 (NME6) from Homo sapiens (Human).